Reading from the N-terminus, the 749-residue chain is Protein lin-54 homolog (749 aa).

Residue K139 forms a Glycyl lysine isopeptide (Lys-Gly) (interchain with G-Cter in SUMO2) linkage. 2 positions are modified to N6-acetyllysine: K244 and K249. A phosphoserine mark is found at S264, S282, S310, and S314. Residue K357 forms a Glycyl lysine isopeptide (Lys-Gly) (interchain with G-Cter in SUMO2) linkage. Residues 521–634 enclose the CRC domain; sequence PRKPCNCTKS…KCIGCKNFEE (114 aa). Residues 523-536 are DNA-binding; sequence KPCNCTKSLCLKLY. Residues C525, C527, C532, C537, C539, C546, C549, C551, and C554 each coordinate Zn(2+). The interval 583–596 is linker; it reads IGKGKEGESDRRHS. Zn(2+) is bound by residues C599, C601, C606, C611, C613, C620, C624, C626, and C629. The DNA-binding stretch occupies residues 599–612; it reads CNCKRSGCLKNYCE. Residue S635 is modified to Phosphoserine. Glycyl lysine isopeptide (Lys-Gly) (interchain with G-Cter in SUMO2) cross-links involve residues K639, K659, and K661.

Belongs to the lin-54 family. In terms of assembly, component of the DREAM complex (also named LINC complex) at least composed of E2F4, E2F5, LIN9, LIN37, LIN52, LIN54, MYBL1, MYBL2, RBL1, RBL2, RBBP4, RBL2, TFDP1 and TFDP2. The complex exists in quiescent cells where it represses cell cycle-dependent genes. It dissociates in S phase when LIN9, LIN37, LIN52 and LIN54 form a subcomplex that binds to MYBL2.

It is found in the nucleus. In terms of biological role, component of the DREAM complex, a multiprotein complex that can both act as a transcription activator or repressor depending on the context. In G0 phase, the complex binds to more than 800 promoters and is required for repression of E2F target genes. In S phase, the complex selectively binds to the promoters of G2/M genes whose products are required for mitosis and participates in their cell cycle dependent activation. In the complex, acts as a DNA-binding protein that binds the promoter of CDK1 in a sequence-specific manner. Specifically recognizes the consensus motif 5'-TTYRAA-3' in target DNA. In Rattus norvegicus (Rat), this protein is Protein lin-54 homolog (Lin54).